The following is a 126-amino-acid chain: Glycine cleavage system H protein (126 aa).

In terms of domain architecture, Lipoyl-binding spans 22 to 104 (VATIGITEYA…YEKAWMVKIE (83 aa)). At Lys-63 the chain carries N6-lipoyllysine.

It belongs to the GcvH family. As to quaternary structure, the glycine cleavage system is composed of four proteins: P, T, L and H. Requires (R)-lipoate as cofactor.

Functionally, the glycine cleavage system catalyzes the degradation of glycine. The H protein shuttles the methylamine group of glycine from the P protein to the T protein. Is also involved in protein lipoylation via its role as an octanoyl/lipoyl carrier protein intermediate. The protein is Glycine cleavage system H protein of Staphylococcus epidermidis (strain ATCC 35984 / DSM 28319 / BCRC 17069 / CCUG 31568 / BM 3577 / RP62A).